We begin with the raw amino-acid sequence, 406 residues long: Multidrug resistance protein MdtG (406 aa).

The next 11 helical transmembrane spans lie at 16–36, 56–76, 90–110, 113–133, 144–164, 171–191, 222–242, 254–274, 288–308, 317–337, and 376–396; these read VAWL…PFLP, LVFS…GGLA, LGMA…QFLL, ALLG…ATQV, TLST…GLLA, PVFF…LFFT, LFVT…ILTL, IAFI…LSAP, ILIT…FVQT, FLLG…LVYN, and AVFC…WNSL.

Belongs to the major facilitator superfamily. DHA1 family. MdtG (TC 2.A.1.2.20) subfamily.

Its subcellular location is the cell inner membrane. The sequence is that of Multidrug resistance protein MdtG from Citrobacter koseri (strain ATCC BAA-895 / CDC 4225-83 / SGSC4696).